Here is a 257-residue protein sequence, read N- to C-terminus: Probable amino-acid ABC transporter ATP-binding protein y4tH (257 aa).

Positions 6–251 (IVFDKVKKAY…PKEERTREFL (246 aa)) constitute an ABC transporter domain. Residue 38 to 45 (GPSGSGKS) participates in ATP binding.

This sequence belongs to the ABC transporter superfamily.

It localises to the cell inner membrane. Its function is as follows. Probably part of a binding-protein-dependent transport system y4tEFGH for an amino acid. Probably responsible for energy coupling to the transport system. This Sinorhizobium fredii (strain NBRC 101917 / NGR234) protein is Probable amino-acid ABC transporter ATP-binding protein y4tH.